The primary structure comprises 75 residues: Brevinin-2SN2 (75 aa).

The signal sequence occupies residues 1-22; that stretch reads MFTLKKPLLFLFFLGTISLSFC. Residues 23 to 40 constitute a propeptide, removed in mature form; the sequence is EEERGADEDDGGEMTEEE. Residues cysteine 69 and cysteine 75 are joined by a disulfide bond.

Belongs to the frog skin active peptide (FSAP) family. Brevinin subfamily. Expressed by the skin glands.

The protein resides in the secreted. Antimicrobial peptide. Active against some Gram-negative and a variety of Gram-positive bacterial strains. Active against fungus C.glabrata 090902 but not against C.albicans ATCC 10231. Shows hemolytic activity against human erythrocytes. In Sylvirana spinulosa (Fine-spined frog), this protein is Brevinin-2SN2.